Reading from the N-terminus, the 165-residue chain is NADPH-dependent 7-cyano-7-deazaguanine reductase (165 aa).

Cysteine 56 serves as the catalytic Thioimide intermediate. Aspartate 63 functions as the Proton donor in the catalytic mechanism. Residues 78–80 and 97–98 contribute to the substrate site; these read VES and HE.

The protein belongs to the GTP cyclohydrolase I family. QueF type 1 subfamily.

It localises to the cytoplasm. It carries out the reaction 7-aminomethyl-7-carbaguanine + 2 NADP(+) = 7-cyano-7-deazaguanine + 2 NADPH + 3 H(+). It functions in the pathway tRNA modification; tRNA-queuosine biosynthesis. Catalyzes the NADPH-dependent reduction of 7-cyano-7-deazaguanine (preQ0) to 7-aminomethyl-7-deazaguanine (preQ1). This chain is NADPH-dependent 7-cyano-7-deazaguanine reductase, found in Bacillus mycoides (strain KBAB4) (Bacillus weihenstephanensis).